Reading from the N-terminus, the 117-residue chain is MARIKRGTNNRKRHKKVLKQAKGYYGSKHTLFKTANQAVMKSLAYSYVGRKRRKRDFRKLWIARINAATRMHDLSYSKFMHGLKVAGVDLNRKVLADMAVRDEKEFAKLVELAKNNL.

Belongs to the bacterial ribosomal protein bL20 family.

In terms of biological role, binds directly to 23S ribosomal RNA and is necessary for the in vitro assembly process of the 50S ribosomal subunit. It is not involved in the protein synthesizing functions of that subunit. This Finegoldia magna (strain ATCC 29328 / DSM 20472 / WAL 2508) (Peptostreptococcus magnus) protein is Large ribosomal subunit protein bL20.